Reading from the N-terminus, the 414-residue chain is Cytochrome b (414 aa).

Helical transmembrane passes span 40–60 (FFGS…VWLA) and 84–104 (GWLI…VIYL). His-91 and His-105 together coordinate heme b. Transmembrane regions (helical) follow at residues 121–141 (LLWM…FFGY), 154–174 (QVIV…SVWV), 188–208 (FFAF…LHIV), 252–272 (LMGV…NPTM), 294–314 (IAPV…PPMY), 317–337 (QFPG…LPWL), 351–371 (IFKW…WLGI), and 378–398 (YTLL…LMPI). The heme b site is built by His-192 and His-206.

It belongs to the cytochrome b family. As to quaternary structure, the main subunits of complex b-c1 are: cytochrome b, cytochrome c1 and the Rieske protein. The cofactor is heme b.

Its subcellular location is the cell membrane. Functionally, component of the ubiquinol-cytochrome c reductase complex (complex III or cytochrome b-c1 complex), which is a respiratory chain that generates an electrochemical potential coupled to ATP synthesis. In Allochromatium vinosum (strain ATCC 17899 / DSM 180 / NBRC 103801 / NCIMB 10441 / D) (Chromatium vinosum), this protein is Cytochrome b (petB).